The sequence spans 821 residues: DNA ligase (821 aa).

Residues 50–54 (DAEYD), 99–100 (SL), and Glu140 each bind NAD(+). Residue Lys142 is the N6-AMP-lysine intermediate of the active site. NAD(+) is bound by residues Arg163, Glu200, Lys319, and Lys343. The Zn(2+) site is built by Cys452, Cys455, Cys470, and Cys476. The BRCT domain occupies 742 to 821 (AAALPLEGKT…AGLQALLAGN (80 aa)).

The protein belongs to the NAD-dependent DNA ligase family. LigA subfamily. Requires Mg(2+) as cofactor. It depends on Mn(2+) as a cofactor.

It catalyses the reaction NAD(+) + (deoxyribonucleotide)n-3'-hydroxyl + 5'-phospho-(deoxyribonucleotide)m = (deoxyribonucleotide)n+m + AMP + beta-nicotinamide D-nucleotide.. Its function is as follows. DNA ligase that catalyzes the formation of phosphodiester linkages between 5'-phosphoryl and 3'-hydroxyl groups in double-stranded DNA using NAD as a coenzyme and as the energy source for the reaction. It is essential for DNA replication and repair of damaged DNA. This Chromobacterium violaceum (strain ATCC 12472 / DSM 30191 / JCM 1249 / CCUG 213 / NBRC 12614 / NCIMB 9131 / NCTC 9757 / MK) protein is DNA ligase.